We begin with the raw amino-acid sequence, 268 residues long: Ribosomal RNA small subunit methyltransferase A (268 aa).

Asn-16, Leu-18, Gly-43, Glu-64, Asp-89, and Asn-110 together coordinate S-adenosyl-L-methionine.

The protein belongs to the class I-like SAM-binding methyltransferase superfamily. rRNA adenine N(6)-methyltransferase family. RsmA subfamily.

The protein resides in the cytoplasm. The enzyme catalyses adenosine(1518)/adenosine(1519) in 16S rRNA + 4 S-adenosyl-L-methionine = N(6)-dimethyladenosine(1518)/N(6)-dimethyladenosine(1519) in 16S rRNA + 4 S-adenosyl-L-homocysteine + 4 H(+). In terms of biological role, specifically dimethylates two adjacent adenosines (A1518 and A1519) in the loop of a conserved hairpin near the 3'-end of 16S rRNA in the 30S particle. May play a critical role in biogenesis of 30S subunits. The chain is Ribosomal RNA small subunit methyltransferase A from Pseudomonas aeruginosa (strain ATCC 15692 / DSM 22644 / CIP 104116 / JCM 14847 / LMG 12228 / 1C / PRS 101 / PAO1).